The sequence spans 1009 residues: Ulvan lyase, long isoform (1009 aa).

An N-terminal signal peptide occupies residues 1–32 (MTAQKSKYFNRIMTMNTLLFSLLTVGFSQAYA). Residue 137–138 (SH) coordinates substrate. His138 (proton donor/acceptor) is an active-site residue. Ca(2+)-binding residues include Asp200, Asp210, and Lys212. The substrate site is built by Tyr291 and Arg308. Residues Asp311, Asp314, and Tyr316 each contribute to the Ca(2+) site. Tyr372 lines the substrate pocket.

The protein belongs to the polysaccharide lyase 24 family.

In terms of biological role, ulvan lyase involved in ulvan degradation. Ulvan is the main polysaccharide component of the Ulvales (green seaweed) cell wall. It is composed of disaccharide building blocks comprising 3-sulfated rhamnose (Rha3S) linked to D-glucuronic acid (GlcA), L-iduronic acid (IduA), or D-xylose (Xyl). Ulvan lyase catalyzes preferentially the endolytic cleavage of the glycosidic bond between Rha3S and the uronic acid GlcA, but not IduA, producing oligosaccharides that have unsaturated 4-deoxy-L-threo-hex-4-enopyranosiduronic acid (deltaUA) at the non-reducing end. The most abundant end products in the degradation of the ulvan polysaccharide were deltaUA-Rha3S disaccharides and deltaUA-Rha3S-IduA-Rha3S and deltaUA-Rha3S-Xyl-Rha3S tetrasaccharides. The polypeptide is Ulvan lyase, long isoform (ullA) (Glaciecola sp. (strain KUL10)).